The sequence spans 236 residues: MTKKYWNINLEDMLEARVHLGHSTQNWNPKMAPYISAKRKGIHIINLTRTARFLSEACDLVFYAASKGKKFLIVGTNNAADEAVARASKRARCHYVNKKWLGGMLTNWSTTETRLQKFRDLRMEQKKGGLNNLPKKEATMLKRKLARLQKYLGGIQYMTGLPDIVIIIDQHKEYTALQECRILGIPTISLIDTNCDPNLSDIAIPANDDAMASIRFILNKLVFAICQGYFSDLRKP.

This sequence belongs to the universal ribosomal protein uS2 family.

The protein localises to the plastid. The sequence is that of Small ribosomal subunit protein uS2c (rps2) from Cuscuta gronovii (Common dodder).